The following is a 713-amino-acid chain: MFGRFLLAIVILQLARTACTQEADDGKCKTCGVTIGQDTWCSECNGANYAPVNGQCVDVNAEGPSKTLCPQHSAGKCTQCGGNSFMYKDGCYSSGEGLPGHSLCLSSDGDGVCTEAAPGYFAPVGAANTEQSVIACGDTTGVTIAAGGNTYKGIADCAECSAPDATAGAEAGKVATCTKCGVSKYLKDNVCVDKAQCNSGSTNKFVAVDDSENGNKCVSCSDNLNGGVANCDTCSYDEQSKKIKCTKCTDNNYLKTTSEGTSCVQKDQCKDGFFPKDDSSAGNKCLPCNDSTDGIANCATCALVSGRSGAALVTCSACTDGYKPSADKTTCEAVSNCKTPGCKACSNEGKENEVCTDCDGSTYLTPTSQCIDSCAKIGNYYGATEGAKKLCKECTAANCKTCDDQGQCQACNDGFYKNGDACSPCHESCKTCSAGTASDCTECPTGKALRYGDDGTKGTCGEGCTTGTGAGACKTCGLTIDGASYCSECATTTEYPQNGVCAPKASRATPTCNDSPIQNGVCGTCADNYFKMNGGCYETVKYPGKTVCISAPNGGTCQKAADGYKLDSGTLTVCSEGCKECASSTDCTTCLDGYVKSASACTKCDASCETCNGAATTCKACATGYYKTASGEGACTSCESDSNGVTGIKGCLNCAPPPNNKGSVLCYLIKDSGSTNKSGLSTGAIAGISVAVIVVVGGLIGFLCWWFLCRGKA.

An N-terminal signal peptide occupies residues 1-17 (MFGRFLLAIVILQLART). At 18–679 (ACTQEADDGK…KDSGSTNKSG (662 aa)) the chain is on the extracellular side. 2 N-linked (GlcNAc...) asparagine glycosylation sites follow: asparagine 289 and asparagine 676. Residues 680–708 (LSTGAIAGISVAVIVVVGGLIGFLCWWFL) traverse the membrane as a helical segment. Topologically, residues 709 to 713 (CRGKA) are cytoplasmic.

Belongs to the Giardia variant surface protein family.

Its subcellular location is the cell membrane. This chain is Major surface-labeled trophozoite antigen 417 (TSA 417), found in Giardia intestinalis (Giardia lamblia).